The primary structure comprises 202 residues: Transcription factor IBH1 (202 aa).

Residues 1-16 (MDAKRTPPPPTPPNPN) are compositionally biased toward pro residues. Residues 1–33 (MDAKRTPPPPTPPNPNPSVIGSGAAADGGGFGR) are disordered. Positions 136–185 (TSAAARAVPPPPRQQGEPPRADALRRLVPGGAGMEYSSLLEETADYLRSL) constitute a bHLH domain.

It belongs to the bHLH protein family. Interacts with ILI1.

Functionally, atypical and probable non DNA-binding bHLH transcription factor that acts as a negative regulator of cell elongation and plant development. Binds the transcription factor ILI1 and forms a heterodimer of antagonistic bHLH transcription factors that function downstream of BZR1 to mediate brassinosteroid regulation of cell elongation and lamina inclination. This is Transcription factor IBH1 (IBH1) from Oryza sativa subsp. indica (Rice).